Here is a 325-residue protein sequence, read N- to C-terminus: Beta-ketoacyl-[acyl-carrier-protein] synthase III (325 aa).

Active-site residues include Cys-112 and His-250. The interval Gln-251 to Arg-255 is ACP-binding. Asn-280 is an active-site residue.

It belongs to the thiolase-like superfamily. FabH family. In terms of assembly, homodimer.

It is found in the cytoplasm. The catalysed reaction is malonyl-[ACP] + acetyl-CoA + H(+) = 3-oxobutanoyl-[ACP] + CO2 + CoA. It participates in lipid metabolism; fatty acid biosynthesis. Catalyzes the condensation reaction of fatty acid synthesis by the addition to an acyl acceptor of two carbons from malonyl-ACP. Catalyzes the first condensation reaction which initiates fatty acid synthesis and may therefore play a role in governing the total rate of fatty acid production. Possesses both acetoacetyl-ACP synthase and acetyl transacylase activities. Its substrate specificity determines the biosynthesis of branched-chain and/or straight-chain of fatty acids. This is Beta-ketoacyl-[acyl-carrier-protein] synthase III from Lactococcus lactis subsp. cremoris (strain MG1363).